The following is a 359-amino-acid chain: MSKFSFNINHQYKKARSGIITTAHGNIRTPAFMPVGTRGTVKAMLPESVAETGADILLGNTYHLMLQPSAERIAKLGGLHKFMNWGKPILTDSGGFQVMSLSKLRKITEEGVSFNSHINGDKYLLTPERSTEIQHLLGSTITMAFDECTPYPATFEEAKTSMQLTTRWAHRSREAFVKRDGYAQFGIIQGSTYEELREQSAKDLIELDFEGYAIGGLAVGEGQELMFKVLAPDFLPQNKPRYLMGVGKPADIIGAVSRGVDMFDCVIPTRSGRNGQAFTKYGTVNIRNSKYAEDNDPLEADCLCPACQNYSKAYLHHLVRIGEILGAMLMTWHNLTYFQNLMSRIREYIALGKDFDFTT.

Asp-92 acts as the Proton acceptor in catalysis. Substrate contacts are provided by residues 92-96, Asp-146, Gln-189, and Gly-216; that span reads DSGGF. The RNA binding stretch occupies residues 245–251; sequence GVGKPAD. Asp-264 (nucleophile) is an active-site residue. The interval 269 to 273 is RNA binding; important for wobble base 34 recognition; sequence TRSGR. Residues Cys-302, Cys-304, Cys-307, and His-333 each coordinate Zn(2+).

It belongs to the queuine tRNA-ribosyltransferase family. As to quaternary structure, homodimer. Within each dimer, one monomer is responsible for RNA recognition and catalysis, while the other monomer binds to the replacement base PreQ1. Zn(2+) serves as cofactor.

The catalysed reaction is 7-aminomethyl-7-carbaguanine + guanosine(34) in tRNA = 7-aminomethyl-7-carbaguanosine(34) in tRNA + guanine. The protein operates within tRNA modification; tRNA-queuosine biosynthesis. Functionally, catalyzes the base-exchange of a guanine (G) residue with the queuine precursor 7-aminomethyl-7-deazaguanine (PreQ1) at position 34 (anticodon wobble position) in tRNAs with GU(N) anticodons (tRNA-Asp, -Asn, -His and -Tyr). Catalysis occurs through a double-displacement mechanism. The nucleophile active site attacks the C1' of nucleotide 34 to detach the guanine base from the RNA, forming a covalent enzyme-RNA intermediate. The proton acceptor active site deprotonates the incoming PreQ1, allowing a nucleophilic attack on the C1' of the ribose to form the product. After dissociation, two additional enzymatic reactions on the tRNA convert PreQ1 to queuine (Q), resulting in the hypermodified nucleoside queuosine (7-(((4,5-cis-dihydroxy-2-cyclopenten-1-yl)amino)methyl)-7-deazaguanosine). The chain is Queuine tRNA-ribosyltransferase from Rickettsia bellii (strain RML369-C).